Reading from the N-terminus, the 140-residue chain is Lipoprotein MlpG (140 aa).

The signal sequence occupies residues 1 to 17 (MKIINILFCLFLLMLNG). Residue cysteine 18 is the site of N-palmitoyl cysteine attachment. Cysteine 18 carries S-diacylglycerol cysteine lipidation. The disordered stretch occupies residues 22-57 (DTNTKQTKSRQKRDLTQKEATQEKPKSKSKEDLLRE). Residues 33–57 (KRDLTQKEATQEKPKSKSKEDLLRE) show a composition bias toward basic and acidic residues.

Belongs to the Multicopy lipoprotein (Mlp) family.

Its subcellular location is the cell outer membrane. In terms of biological role, an outer membrane protein that may participate in pathogenesis. Some human Lyme disease patients have antibodies against this protein. The Mlp proteins probably undergo intragenic recombination, generating new alleles. This Borreliella burgdorferi (strain ATCC 35210 / DSM 4680 / CIP 102532 / B31) (Borrelia burgdorferi) protein is Lipoprotein MlpG.